The sequence spans 254 residues: Phosphoribosylaminoimidazole-succinocarboxamide synthase (254 aa).

Belongs to the SAICAR synthetase family.

The catalysed reaction is 5-amino-1-(5-phospho-D-ribosyl)imidazole-4-carboxylate + L-aspartate + ATP = (2S)-2-[5-amino-1-(5-phospho-beta-D-ribosyl)imidazole-4-carboxamido]succinate + ADP + phosphate + 2 H(+). It participates in purine metabolism; IMP biosynthesis via de novo pathway; 5-amino-1-(5-phospho-D-ribosyl)imidazole-4-carboxamide from 5-amino-1-(5-phospho-D-ribosyl)imidazole-4-carboxylate: step 1/2. This is Phosphoribosylaminoimidazole-succinocarboxamide synthase from Rhodospirillum centenum (strain ATCC 51521 / SW).